We begin with the raw amino-acid sequence, 847 residues long: Glucans biosynthesis glucosyltransferase H (847 aa).

The Cytoplasmic segment spans residues 1–138 (MNKTTEYIDA…KWRTVGTIRR (138 aa)). Residues 139–156 (YILLILTLAQTVVATWYM) form a helical membrane-spanning segment. Residues 157–193 (KTILPYQGWALINPMDMVGQDIWVSFMQLLPYMLQTG) lie on the Periplasmic side of the membrane. Residues 194–216 (ILILFAVLFCWVSAGFWTALMGF) form a helical membrane-spanning segment. Topologically, residues 217–511 (LQLLIGRDKY…LVKGMHPVHR (295 aa)) are cytoplasmic. Residues 512–534 (AVFLTGVMSYLSAPLWFMFLALS) traverse the membrane as a helical segment. Residues 535–567 (TALQVVHALTEPQYFLQPRQLFPVWPQWRPELA) lie on the Periplasmic side of the membrane. The chain crosses the membrane as a helical span at residues 568 to 590 (IALFASTMVLLFLPKLLSIMLIW). The Cytoplasmic portion of the chain corresponds to 591 to 602 (CKGTKEYGGFWR). The chain crosses the membrane as a helical span at residues 603-625 (VTLSLLLEVLFSVLLAPVRMLFH). The Periplasmic portion of the chain corresponds to 626–679 (TVFVVSAFLGWEVVWNSPQRDDDSTPWGEAFMRHGSQLLLGLVWAVGMAWLDLR). A helical transmembrane segment spans residues 680-702 (FLFWLAPIVFSLILSPFVSVISS). The Cytoplasmic portion of the chain corresponds to 703-847 (RSTVGLRTKR…ALQGRTSSAG (145 aa)).

The protein belongs to the glycosyltransferase 2 family. OpgH subfamily.

Its subcellular location is the cell inner membrane. Its pathway is glycan metabolism; osmoregulated periplasmic glucan (OPG) biosynthesis. In terms of biological role, involved in the biosynthesis of osmoregulated periplasmic glucans (OPGs). The protein is Glucans biosynthesis glucosyltransferase H of Salmonella typhi.